Consider the following 244-residue polypeptide: Tetraspanin-7 (244 aa).

The Cytoplasmic segment spans residues 1 to 11; the sequence is METKPVITCLK. The chain crosses the membrane as a helical span at residues 12 to 35; the sequence is TLLIIYSFVFWITGVILLAVGVWG. Residues 36-51 are Extracellular-facing; it reads KLTLGTYISLIAENST. A glycan (N-linked (GlcNAc...) asparagine) is linked at asparagine 49. Residues 52 to 70 traverse the membrane as a helical segment; that stretch reads NAPYVLIGTGTTIVVFGLF. Residues 71–81 are Cytoplasmic-facing; it reads GCFATCRGSPW. The helical transmembrane segment at 82–107 threads the bilayer; the sequence is MLKLYAMFLSLVFLAELVAGISGFVF. Over 108-208 the chain is Extracellular; that stretch reads RHEIKDTFLR…LVTSFMETNM (101 aa). N-linked (GlcNAc...) asparagine glycans are attached at residues asparagine 150, asparagine 153, asparagine 172, and asparagine 183. The helical transmembrane segment at 209-229 threads the bilayer; sequence GIIAGVAFGIAFSQLIGMLLA. Residues 230-244 are Cytoplasmic-facing; sequence CCLSRFITANQYEMV.

Belongs to the tetraspanin (TM4SF) family.

Its subcellular location is the membrane. Its function is as follows. May be involved in cell proliferation and cell motility. This chain is Tetraspanin-7 (TSPAN7), found in Pongo pygmaeus (Bornean orangutan).